A 791-amino-acid chain; its full sequence is Diacylglycerol kinase gamma (791 aa).

Disordered stretches follow at residues 82-103 (KPRHETSDHPTEGASNSEANSA) and 117-154 (DEACAPDTESNMAEKQAPAEDQVAATPLEPPVPRSSSS). The segment covering 83–92 (PRHETSDHPT) has biased composition (basic and acidic residues). The span at 94-103 (GASNSEANSA) shows a compositional bias: polar residues. 2 EF-hand domains span residues 175-210 (RPQDKLEFMFRLYDSDENGLLDQAEMDCIVNQMLHI) and 220-255 (ELRPILKEMLQGMDYDRDGFVSLQEWVHGGMTTIPL). Residues Asp-188, Asp-190, Asn-192, Glu-199, Asp-233, Asp-235, Asp-237, and Glu-244 each contribute to the Ca(2+) site. 2 consecutive Phorbol-ester/DAG-type zinc fingers follow at residues 271–321 (RHAW…IPGC) and 336–385 (QHAW…LCDG). The DAGKc domain maps to 430 to 564 (PGTHPLLVLV…LDRWHLEVIP (135 aa)). Residues 768 to 791 (APMMMGPPQKSSFFSLRRKSRSKD) are disordered.

It belongs to the eukaryotic diacylglycerol kinase family. As to expression, predominantly expressed in retina and in a much lesser extent in the brain. Other tissues contain extremely low levels of DGK-gamma.

Its subcellular location is the membrane. The protein resides in the cytoplasm. It localises to the cytosol. The protein localises to the cytoskeleton. The enzyme catalyses a 1,2-diacyl-sn-glycerol + ATP = a 1,2-diacyl-sn-glycero-3-phosphate + ADP + H(+). It carries out the reaction 1,2-didecanoyl-sn-glycerol + ATP = 1,2-didecanoyl-sn-glycero-3-phosphate + ADP + H(+). It catalyses the reaction 1-octadecanoyl-2-(5Z,8Z,11Z,14Z-eicosatetraenoyl)-sn-glycerol + ATP = 1-octadecanoyl-2-(5Z,8Z,11Z,14Z-eicosatetraenoyl)-sn-glycero-3-phosphate + ADP + H(+). The catalysed reaction is 1,2-di-(9Z-octadecenoyl)-sn-glycerol + ATP = 1,2-di-(9Z-octadecenoyl)-sn-glycero-3-phosphate + ADP + H(+). The enzyme catalyses 1-octadecanoyl-2-(9Z,12Z)-octadecadienoyl-sn-glycerol + ATP = 1-octadecanoyl-2-(9Z,12Z-octadecadienoyl)-sn-glycero-3-phosphate + ADP + H(+). It participates in lipid metabolism; glycerolipid metabolism. The activity is calcium-dependent. Requires phosphatidylserine for maximal activity. Diacylglycerol kinase that converts diacylglycerol/DAG into phosphatidic acid/phosphatidate/PA and regulates the respective levels of these two bioactive lipids. Thereby, acts as a central switch between the signaling pathways activated by these second messengers with different cellular targets and opposite effects in numerous biological processes. Has no apparent specificity with regard to the acyl compositions of diacylglycerol. Specifically expressed in the cerebellum where it controls the level of diacylglycerol which in turn regulates the activity of protein kinase C gamma. Through protein kinase C gamma, indirectly regulates the dendritic development of Purkinje cells, cerebellar long term depression and ultimately cerebellar motor coordination. The polypeptide is Diacylglycerol kinase gamma (DGKG) (Homo sapiens (Human)).